A 247-amino-acid polypeptide reads, in one-letter code: Proteasome subunit alpha (247 aa).

This sequence belongs to the peptidase T1A family. As to quaternary structure, the 20S proteasome core is composed of 14 alpha and 14 beta subunits that assemble into four stacked heptameric rings, resulting in a barrel-shaped structure. The two inner rings, each composed of seven catalytic beta subunits, are sandwiched by two outer rings, each composed of seven alpha subunits. The catalytic chamber with the active sites is on the inside of the barrel. Has a gated structure, the ends of the cylinder being occluded by the N-termini of the alpha-subunits. Is capped at one or both ends by the proteasome regulatory ATPase, PAN.

The protein resides in the cytoplasm. Its activity is regulated as follows. The formation of the proteasomal ATPase PAN-20S proteasome complex, via the docking of the C-termini of PAN into the intersubunit pockets in the alpha-rings, triggers opening of the gate for substrate entry. Interconversion between the open-gate and close-gate conformations leads to a dynamic regulation of the 20S proteasome proteolysis activity. Its function is as follows. Component of the proteasome core, a large protease complex with broad specificity involved in protein degradation. This Methanosarcina acetivorans (strain ATCC 35395 / DSM 2834 / JCM 12185 / C2A) protein is Proteasome subunit alpha.